The following is a 325-amino-acid chain: Glutarate 2-hydroxylase (325 aa).

The Fe cation site is built by His160, Asp162, and His292.

This sequence belongs to the glutarate hydroxylase family. Homotetramer. Fe(2+) is required as a cofactor.

The enzyme catalyses glutarate + 2-oxoglutarate + O2 = (S)-2-hydroxyglutarate + succinate + CO2. It functions in the pathway amino-acid degradation. Its function is as follows. Acts as an alpha-ketoglutarate-dependent dioxygenase catalyzing hydroxylation of glutarate (GA) to L-2-hydroxyglutarate (L2HG). Functions in a L-lysine degradation pathway that proceeds via cadaverine, glutarate and L-2-hydroxyglutarate. This is Glutarate 2-hydroxylase from Klebsiella pneumoniae (strain 342).